The chain runs to 758 residues: Phosphoribosylformylglycinamidine synthase subunit PurL (758 aa).

Residue H57 is part of the active site. Positions 60 and 104 each coordinate ATP. E106 contacts Mg(2+). Substrate-binding positions include 107–110 (SHNH) and R129. The Proton acceptor role is filled by H108. D130 serves as a coordination point for Mg(2+). Q254 contributes to the substrate binding site. D282 provides a ligand contact to Mg(2+). Residue 326-328 (ESQ) coordinates substrate. N509 and G546 together coordinate ATP. N547 serves as a coordination point for Mg(2+). Substrate is bound at residue S549.

It belongs to the FGAMS family. In terms of assembly, monomer. Part of the FGAM synthase complex composed of 1 PurL, 1 PurQ and 2 PurS subunits.

The protein localises to the cytoplasm. It carries out the reaction N(2)-formyl-N(1)-(5-phospho-beta-D-ribosyl)glycinamide + L-glutamine + ATP + H2O = 2-formamido-N(1)-(5-O-phospho-beta-D-ribosyl)acetamidine + L-glutamate + ADP + phosphate + H(+). It participates in purine metabolism; IMP biosynthesis via de novo pathway; 5-amino-1-(5-phospho-D-ribosyl)imidazole from N(2)-formyl-N(1)-(5-phospho-D-ribosyl)glycinamide: step 1/2. In terms of biological role, part of the phosphoribosylformylglycinamidine synthase complex involved in the purines biosynthetic pathway. Catalyzes the ATP-dependent conversion of formylglycinamide ribonucleotide (FGAR) and glutamine to yield formylglycinamidine ribonucleotide (FGAM) and glutamate. The FGAM synthase complex is composed of three subunits. PurQ produces an ammonia molecule by converting glutamine to glutamate. PurL transfers the ammonia molecule to FGAR to form FGAM in an ATP-dependent manner. PurS interacts with PurQ and PurL and is thought to assist in the transfer of the ammonia molecule from PurQ to PurL. The sequence is that of Phosphoribosylformylglycinamidine synthase subunit PurL from Corynebacterium ammoniagenes (Brevibacterium ammoniagenes).